We begin with the raw amino-acid sequence, 732 residues long: Catalase-peroxidase (732 aa).

Over residues 1-11 the composition is skewed to basic and acidic residues; it reads MDAKTDDKDGG. The interval 1 to 24 is disordered; the sequence is MDAKTDDKDGGKCPFPHGGGRGRR. Positions 97–219 form a cross-link, tryptophyl-tyrosyl-methioninium (Trp-Tyr) (with M-245); that stretch reads WHSAGTYRTT…LGAVQMGLIY (123 aa). His-98 acts as the Proton acceptor in catalysis. The segment at residues 219 to 245 is a cross-link (tryptophyl-tyrosyl-methioninium (Tyr-Met) (with W-97)); that stretch reads YVNPEGPNGNPDPVAAAKDIRETFARM. His-260 contributes to the heme b binding site.

This sequence belongs to the peroxidase family. Peroxidase/catalase subfamily. Homodimer or homotetramer. The cofactor is heme b. In terms of processing, formation of the three residue Trp-Tyr-Met cross-link is important for the catalase, but not the peroxidase activity of the enzyme.

The catalysed reaction is H2O2 + AH2 = A + 2 H2O. The enzyme catalyses 2 H2O2 = O2 + 2 H2O. Functionally, bifunctional enzyme with both catalase and broad-spectrum peroxidase activity. The protein is Catalase-peroxidase of Rhodopseudomonas palustris (strain HaA2).